Consider the following 785-residue polypeptide: Copal-8-ol diphosphate hydratase TPSSA3, chloroplastic (785 aa).

Residue Arg240 coordinates substrate. Mg(2+) contacts are provided by Asp372 and Asp374. Positions 372-375 (DIDD) match the DXDD motif motif. A substrate-binding site is contributed by Arg459.

The protein belongs to the terpene synthase family. Requires Mg(2+) as cofactor.

It localises to the plastid. Its subcellular location is the chloroplast. The catalysed reaction is (2E,6E,10E)-geranylgeranyl diphosphate + H2O = 8-hydroxycopalyl diphosphate. Its pathway is secondary metabolite biosynthesis; terpenoid biosynthesis. In terms of biological role, involved in the biosynthesis of labdane-type diterpenoid including sclareol, a diterpene-diol that is used as fragrance and flavoring, and has anticancer effects (able to kill leukemic and colon cancer cells by apoptosis). Sclareol can also be used as synthesis precursor of ambergris substitution fragance products such as ambrox. Terpene synthase that produces 8-hydroxycopalyl diphosphate from geranylgeranyl diphosphate (GGPP). The protein is Copal-8-ol diphosphate hydratase TPSSA3, chloroplastic of Salvia sclarea (Clary sage).